Consider the following 119-residue polypeptide: DNA-binding protein inhibitor ID-3 (119 aa).

One can recognise a bHLH domain in the interval 28–80 (RGKSPSTEEPLSLLDDMNHCYSRLRELVPGVPRGTQLSQVEILQRVIDYILDL). The interval 35 to 87 (EEPLSLLDDMNHCYSRLRELVPGVPRGTQLSQVEILQRVIDYILDLQVVLAEP) is interaction with IFI204.

In terms of assembly, homodimer, and heterodimer with other HLH proteins. Interacts with CLOCK and BMAL1. Interacts with COPS5 and COPS7A. Interacts with IFI204. Interacts with GATA4 and NKX2-5. Interacts with ANKRD2; both proteins cooperate in myoblast differentiation. Polyubiquitinated; which is favored by Ifi204 and leads to proteasomal degradation. As to expression, expressed by myoblasts (at protein level).

The protein localises to the nucleus. It is found in the cytoplasm. In terms of biological role, transcriptional regulator (lacking a basic DNA binding domain) which negatively regulates the basic helix-loop-helix (bHLH) transcription factors by forming heterodimers and inhibiting their DNA binding and transcriptional activity. Implicated in regulating a variety of cellular processes, including cellular growth, senescence, differentiation, apoptosis, angiogenesis, and neoplastic transformation. Involved in myogenesis by inhibiting skeletal muscle and cardiac myocyte differentiation and promoting muscle precursor cells proliferation. Inhibits the binding of E2A-containing protein complexes to muscle creatine kinase E-box enhancer. Regulates the circadian clock by repressing the transcriptional activator activity of the CLOCK-BMAL1 heterodimer. This Mus musculus (Mouse) protein is DNA-binding protein inhibitor ID-3 (Id3).